The following is a 114-amino-acid chain: Ribonuclease P protein component (114 aa).

This sequence belongs to the RnpA family. In terms of assembly, consists of a catalytic RNA component (M1 or rnpB) and a protein subunit.

The enzyme catalyses Endonucleolytic cleavage of RNA, removing 5'-extranucleotides from tRNA precursor.. Functionally, RNaseP catalyzes the removal of the 5'-leader sequence from pre-tRNA to produce the mature 5'-terminus. It can also cleave other RNA substrates such as 4.5S RNA. The protein component plays an auxiliary but essential role in vivo by binding to the 5'-leader sequence and broadening the substrate specificity of the ribozyme. The sequence is that of Ribonuclease P protein component from Borrelia hermsii (strain HS1 / DAH).